The following is a 377-amino-acid chain: NIF3-like protein 1 (377 aa).

N6-acetyllysine is present on Lys109. Residues 244–377 (LLLHTGMGRL…ETDRDPLQVV (134 aa)) form a mediates interaction with COPS2 region. A Phosphothreonine modification is found at Thr255. Phosphoserine is present on Ser259.

This sequence belongs to the GTP cyclohydrolase I type 2/NIF3 family. Homodimer. Interacts with COPS2. Interacts with THOC7.

It localises to the cytoplasm. It is found in the nucleus. Functionally, may function as a transcriptional corepressor through its interaction with COPS2, negatively regulating the expression of genes involved in neuronal differentiation. This is NIF3-like protein 1 from Homo sapiens (Human).